A 283-amino-acid polypeptide reads, in one-letter code: Protein/nucleic acid deglycase HchA (283 aa).

Zn(2+) is bound by residues His-86, Glu-91, and His-123. The active-site Nucleophile is the Cys-185.

Belongs to the peptidase C56 family. HchA subfamily. Homodimer.

The protein localises to the cytoplasm. It catalyses the reaction N(omega)-(1-hydroxy-2-oxopropyl)-L-arginyl-[protein] + H2O = lactate + L-arginyl-[protein] + H(+). The enzyme catalyses N(6)-(1-hydroxy-2-oxopropyl)-L-lysyl-[protein] + H2O = lactate + L-lysyl-[protein] + H(+). It carries out the reaction S-(1-hydroxy-2-oxopropyl)-L-cysteinyl-[protein] + H2O = lactate + L-cysteinyl-[protein] + H(+). The catalysed reaction is N(omega)-(1-hydroxy-2-oxoethyl)-L-arginyl-[protein] + H2O = L-arginyl-[protein] + glycolate + H(+). It catalyses the reaction N(6)-(1-hydroxy-2-oxoethyl)-L-lysyl-[protein] + H2O = glycolate + L-lysyl-[protein] + H(+). The enzyme catalyses S-(1-hydroxy-2-oxoethyl)-L-cysteinyl-[protein] + H2O = glycolate + L-cysteinyl-[protein] + H(+). It carries out the reaction N(2)-(1-hydroxy-2-oxopropyl)-dGTP + H2O = lactate + dGTP + H(+). The catalysed reaction is N(2)-(1-hydroxy-2-oxopropyl)-GTP + H2O = lactate + GTP + H(+). It catalyses the reaction N(2)-(1-hydroxy-2-oxopropyl)-GDP + H2O = lactate + GDP + H(+). The enzyme catalyses N(2)-(1-hydroxy-2-oxopropyl)-GMP + H2O = lactate + GMP + H(+). It carries out the reaction N(2)-(1-hydroxy-2-oxoethyl)-dGTP + H2O = dGTP + glycolate + H(+). The catalysed reaction is N(2)-(1-hydroxy-2-oxoethyl)-GTP + H2O = glycolate + GTP + H(+). It catalyses the reaction N(2)-(1-hydroxy-2-oxoethyl)-GDP + H2O = glycolate + GDP + H(+). The enzyme catalyses N(2)-(1-hydroxy-2-oxoethyl)-GMP + H2O = glycolate + GMP + H(+). It carries out the reaction an N(2)-(1-hydroxy-2-oxopropyl)-guanosine in RNA + H2O = a guanosine in RNA + lactate + H(+). The catalysed reaction is an N(2)-(1-hydroxy-2-oxopropyl)-2'-deoxyguanosine in DNA + H2O = a 2'-deoxyguanosine in DNA + lactate + H(+). It catalyses the reaction an N(2)-(1-hydroxy-2-oxoethyl)-guanosine in RNA + H2O = a guanosine in RNA + glycolate + H(+). The enzyme catalyses an N(2)-(1-hydroxy-2-oxoethyl)-2'-deoxyguanosine in DNA + H2O = a 2'-deoxyguanosine in DNA + glycolate + H(+). Its function is as follows. Protein and nucleotide deglycase that catalyzes the deglycation of the Maillard adducts formed between amino groups of proteins or nucleotides and reactive carbonyl groups of glyoxals. Thus, functions as a protein deglycase that repairs methylglyoxal- and glyoxal-glycated proteins, and releases repaired proteins and lactate or glycolate, respectively. Deglycates cysteine, arginine and lysine residues in proteins, and thus reactivates these proteins by reversing glycation by glyoxals. Acts on early glycation intermediates (hemithioacetals and aminocarbinols), preventing the formation of Schiff bases and advanced glycation endproducts (AGE). Also functions as a nucleotide deglycase able to repair glycated guanine in the free nucleotide pool (GTP, GDP, GMP, dGTP) and in DNA and RNA. Is thus involved in a major nucleotide repair system named guanine glycation repair (GG repair), dedicated to reversing methylglyoxal and glyoxal damage via nucleotide sanitization and direct nucleic acid repair. Plays an important role in protecting cells from carbonyl stress. This Escherichia coli (strain 55989 / EAEC) protein is Protein/nucleic acid deglycase HchA.